The sequence spans 344 residues: Sorting nexin-16 (344 aa).

Residues 1-10 (MATPYVPVPM) show a composition bias toward pro residues. 2 disordered regions span residues 1–49 (MATP…DSSV) and 83–105 (SIEY…NWED). A compositionally biased stretch (polar residues) spans 14–26 (NSASSFTNNRNQR). Residues 27–40 (SSSFGSVSTSSNSS) show a composition bias toward low complexity. A compositionally biased stretch (basic and acidic residues) spans 88–105 (ARPRDTEEQHPDALNWED). Positions 105–218 (DRPSTPTILG…EFLCLDDPPG (114 aa)) constitute a PX domain. A 1,2-diacyl-sn-glycero-3-phospho-(1D-myo-inositol-3-phosphate) contacts are provided by Arg144, Thr146, and Arg184. Residue Ser222 is modified to Phosphoserine. The stretch at 223–278 (LEESRAFCETLEETNYHLQRELLEKQKEVESLKKLLGEKQLHIDALETRIRTLSLE) forms a coiled coil.

The protein belongs to the sorting nexin family. In terms of assembly, homooligomer. Interacts with EGFR.

Its subcellular location is the early endosome membrane. The protein resides in the late endosome membrane. It is found in the cytoplasm. The protein localises to the lysosome. Functionally, may be involved in several stages of intracellular trafficking. Plays a role in protein transport from early to late endosomes. Plays a role in protein transport to the lysosome. Promotes degradation of EGFR after EGF signaling. This is Sorting nexin-16 (Snx16) from Rattus norvegicus (Rat).